The chain runs to 37 residues: MKVRASVKKICRNCKVIRRNGSVRVICSEPRHKQRQG.

This sequence belongs to the bacterial ribosomal protein bL36 family.

This is Large ribosomal subunit protein bL36 from Marinobacter nauticus (strain ATCC 700491 / DSM 11845 / VT8) (Marinobacter aquaeolei).